The primary structure comprises 496 residues: Transmembrane protein 104 (496 aa).

Residues 1–10 (MAGEITETGE) lie on the Cytoplasmic side of the membrane. The helical transmembrane segment at 11–31 (LYSSYVGLVYMFNLIVGTGAL) threads the bilayer. The Extracellular portion of the chain corresponds to 32–36 (TMPKA). The chain crosses the membrane as a helical span at residues 37–57 (FATAGWLVSLVLLVFLGFMSF). Topologically, residues 58–146 (VTTTFVIEAM…SMFFNKVGVN (89 aa)) are cytoplasmic. A helical transmembrane segment spans residues 147–167 (LFYFCIIVYLYGDLAIYAAAV). Topologically, residues 168–204 (PFSLMQVTCSATGNDSCGVEADTKYNDTDRCWGPLRR) are extracellular. Asn193 carries N-linked (GlcNAc...) asparagine glycosylation. The chain crosses the membrane as a helical span at residues 205 to 225 (VDAYRIYLAIFTLLLGPFTFF). Residues 226-233 (DVQKTKYL) are Cytoplasmic-facing. The chain crosses the membrane as a helical span at residues 234 to 254 (QILTSLMRWIAFAVMIVLALI). Residues 255 to 276 (RIGHGQGEGHPPLADFSGVRNL) are Extracellular-facing. The chain crosses the membrane as a helical span at residues 277–297 (FGVCVYSFMCQHSLPSLITPV). Residues 298–306 (SSKRHLTRL) lie on the Cytoplasmic side of the membrane. A helical membrane pass occupies residues 307–327 (VFLDYVLILAFYGLLSFTAIF). Residues 328-354 (CFRGDSLMDMYTLNFARCDVVGLAAVR) are Extracellular-facing. The helical transmembrane segment at 355–375 (FFLGLFPVFTISTNFPIIAVT) threads the bilayer. The Cytoplasmic portion of the chain corresponds to 376–397 (LRNNWKTLFHREGGTYPWVVDR). Residues 398 to 418 (VVFPTITLVPPVLVAFCTHDL) traverse the membrane as a helical segment. Residues 419–421 (ESL) lie on the Extracellular side of the membrane. The chain crosses the membrane as a helical span at residues 422 to 442 (VGITGAYAGTGIQYVIPAFLV). The Cytoplasmic portion of the chain corresponds to 443 to 470 (YHCRRDTQLAFGCGVSNKHRSPFRHTFW). The chain crosses the membrane as a helical span at residues 471 to 491 (VGFVLLWAFSCFIFVTANIIL). At 492-496 (SETKL) the chain is on the extracellular side.

This sequence belongs to the TMEM104 family.

The protein resides in the membrane. The chain is Transmembrane protein 104 (TMEM104) from Homo sapiens (Human).